We begin with the raw amino-acid sequence, 273 residues long: Anthranilate synthase beta subunit 2, chloroplastic (273 aa).

Residues 1–47 constitute a chloroplast transit peptide; the sequence is MATAARLLPKIQSPASPAVAEARRRRPSSLRLGVTSGPARTLKQKLV. Residues 15-35 form a disordered region; sequence ASPAVAEARRRRPSSLRLGVT. Residues 70-269 form the Glutamine amidotransferase type-1 domain; it reads PIIVIDNYDS…IKIIEGYEAL (200 aa). L-glutamine is bound at residue 121–123; that stretch reads GPG. The active-site Nucleophile is C148. L-glutamine contacts are provided by residues Q152 and 202–203; that span reads SL. Residues H243 and E245 contribute to the active site.

As to quaternary structure, heterotetramer consisting of two non-identical subunits: a beta subunit and a large alpha subunit. Expressed in roots and leaves.

The protein localises to the plastid. The protein resides in the chloroplast. It carries out the reaction chorismate + L-glutamine = anthranilate + pyruvate + L-glutamate + H(+). Its pathway is amino-acid biosynthesis; L-tryptophan biosynthesis; L-tryptophan from chorismate: step 1/5. Part of a heterotetrameric complex that catalyzes the two-step biosynthesis of anthranilate, an intermediate in the biosynthesis of L-tryptophan. In the first step, the glutamine-binding beta subunit of anthranilate synthase (AS) provides the glutamine amidotransferase activity which generates ammonia as a substrate that, along with chorismate, is used in the second step, catalyzed by the large alpha subunit of AS to produce anthranilate. This Oryza sativa subsp. japonica (Rice) protein is Anthranilate synthase beta subunit 2, chloroplastic.